Here is an 892-residue protein sequence, read N- to C-terminus: Alpha-actinin-1 (892 aa).

Met1 is modified (N-acetylmethionine). Positions 1–247 (MDHYDSQQTN…IMTYVSSFYH (247 aa)) are actin-binding. A Phosphoserine modification is found at Ser6. Tyr12 is subject to Phosphotyrosine; by FAK1. 2 Calponin-homology (CH) domains span residues 31–135 (KQQR…LRFA) and 144–250 (TSAK…HAFS). N6-acetyllysine occurs at positions 95 and 195. Spectrin repeat units follow at residues 274–384 (QLME…WLLN), 394–499 (HLAE…ALER), 509–620 (QLYL…ALTE), and 630–733 (RLRK…EVEN). Residues 274–733 (QLMEDYEKLA…IARTINEVEN (460 aa)) are interaction with DDN. At Ser471 the chain carries Phosphoserine. Residue Lys676 is modified to N6-acetyllysine. The residue at position 677 (Ser677) is a Phosphoserine. 2 consecutive EF-hand domains span residues 746–781 (EQMN…LGYD) and 787–822 (QGEA…ETAD). Residues Asp759, Asp761, Ser763, Thr765, and Glu770 each coordinate Ca(2+). Residue Ser890 is modified to Phosphoserine.

It belongs to the alpha-actinin family. As to quaternary structure, homodimer; antiparallel. Interacts with MYOZ2, TTID and LPP. Interacts with DDN. Interacts with PSD. Interacts with MICALL2. Interacts with DNM2 and CTTN. Interacts with PDLIM1. Interacts with PDLIM2. Interacts with PDLIM4 (via PDZ domain). Interacts with IGSF8.

The protein localises to the cytoplasm. The protein resides in the cytoskeleton. It is found in the myofibril. It localises to the sarcomere. Its subcellular location is the z line. The protein localises to the cell membrane. The protein resides in the cell junction. It is found in the cell projection. It localises to the ruffle. Its function is as follows. F-actin cross-linking protein which is thought to anchor actin to a variety of intracellular structures. Association with IGSF8 regulates the immune synapse formation and is required for efficient T-cell activation. The sequence is that of Alpha-actinin-1 (Actn1) from Mus musculus (Mouse).